We begin with the raw amino-acid sequence, 597 residues long: Phosphoinositide phosphatase SAC7 (597 aa).

Positions 130 to 458 (LSVAEKTTGL…GDEISIQYSG (329 aa)) constitute an SAC domain. The Phosphatase catalytic core signature appears at 393 to 404 (RSNCIDCLDRTN). Transmembrane regions (helical) follow at residues 528–548 (AVAN…FATM) and 559–579 (HKHL…AALV).

As to expression, ubiquitous.

It localises to the endoplasmic reticulum membrane. Its subcellular location is the cytoplasmic vesicle membrane. Its function is as follows. Phosphoinositide phosphatase that preferentially hydrolyzes PtdIns(4)P. Regulates the accumulation of PtdIns(4)P on membrane compartments at the tips of growing root hairs leading to proper root hair development. The polypeptide is Phosphoinositide phosphatase SAC7 (SAC7) (Arabidopsis thaliana (Mouse-ear cress)).